Consider the following 196-residue polypeptide: Indolepyruvate oxidoreductase subunit IorB (196 aa).

As to quaternary structure, heterodimer of the IorA and IorB subunits.

It carries out the reaction indole-3-pyruvate + 2 oxidized [2Fe-2S]-[ferredoxin] + CoA = (indol-3-yl)acetyl-CoA + 2 reduced [2Fe-2S]-[ferredoxin] + CO2 + H(+). Catalyzes the ferredoxin-dependent oxidative decarboxylation of arylpyruvates. The chain is Indolepyruvate oxidoreductase subunit IorB (iorB) from Methanothermobacter thermautotrophicus (strain ATCC 29096 / DSM 1053 / JCM 10044 / NBRC 100330 / Delta H) (Methanobacterium thermoautotrophicum).